Here is a 219-residue protein sequence, read N- to C-terminus: Thiopurine S-methyltransferase (219 aa).

Residues tryptophan 10, leucine 45, glutamate 66, and arginine 123 each contribute to the S-adenosyl-L-methionine site.

It belongs to the class I-like SAM-binding methyltransferase superfamily. TPMT family.

The protein localises to the cytoplasm. The catalysed reaction is S-adenosyl-L-methionine + a thiopurine = S-adenosyl-L-homocysteine + a thiopurine S-methylether.. The chain is Thiopurine S-methyltransferase from Bordetella petrii (strain ATCC BAA-461 / DSM 12804 / CCUG 43448).